The chain runs to 371 residues: Anhydro-N-acetylmuramic acid kinase (371 aa).

Residue 9-16 (GTSLDAVD) participates in ATP binding.

The protein belongs to the anhydro-N-acetylmuramic acid kinase family.

It carries out the reaction 1,6-anhydro-N-acetyl-beta-muramate + ATP + H2O = N-acetyl-D-muramate 6-phosphate + ADP + H(+). It functions in the pathway amino-sugar metabolism; 1,6-anhydro-N-acetylmuramate degradation. It participates in cell wall biogenesis; peptidoglycan recycling. In terms of biological role, catalyzes the specific phosphorylation of 1,6-anhydro-N-acetylmuramic acid (anhMurNAc) with the simultaneous cleavage of the 1,6-anhydro ring, generating MurNAc-6-P. Is required for the utilization of anhMurNAc either imported from the medium or derived from its own cell wall murein, and thus plays a role in cell wall recycling. This is Anhydro-N-acetylmuramic acid kinase from Caulobacter vibrioides (strain ATCC 19089 / CIP 103742 / CB 15) (Caulobacter crescentus).